The sequence spans 175 residues: Large ribosomal subunit protein uL16 (175 aa).

Belongs to the universal ribosomal protein uL16 family.

The chain is Large ribosomal subunit protein uL16 from Metallosphaera sedula (strain ATCC 51363 / DSM 5348 / JCM 9185 / NBRC 15509 / TH2).